The following is a 203-amino-acid chain: Methyltransferase-like 26 (203 aa).

Belongs to the UPF0585 family.

The chain is Methyltransferase-like 26 from Xenopus tropicalis (Western clawed frog).